The chain runs to 664 residues: tRNA uridine 5-carboxymethylaminomethyl modification enzyme MnmG (664 aa).

Residues 14 to 19, Val126, and Ser183 each bind FAD; that span reads GGGHSG. Residue 277 to 291 coordinates NAD(+); the sequence is GPRYCPSIEDKIDRF. Gln374 provides a ligand contact to FAD.

It belongs to the MnmG family. Homodimer. Heterotetramer of two MnmE and two MnmG subunits. FAD serves as cofactor.

The protein localises to the cytoplasm. Its function is as follows. NAD-binding protein involved in the addition of a carboxymethylaminomethyl (cmnm) group at the wobble position (U34) of certain tRNAs, forming tRNA-cmnm(5)s(2)U34. The sequence is that of tRNA uridine 5-carboxymethylaminomethyl modification enzyme MnmG from Salinibacter ruber (strain DSM 13855 / M31).